The primary structure comprises 405 residues: MQEKEASPHGFLPRFQHFATQAIHVGQEPEQWTSQAVVPPISLSTTFKQGAPGQHSGFEYSRSGNPTRNCLEKAVAALDGAKYSLAFASGLAATVTITHLLKAGDQIICMDDVYGGTNRYFRQVATEFGLKISFVDCSKPKLLEAAITPETKLVWIETPTNPSLKMIDIEACAHTVHKHGDIILVVDNTFMSAYFQRPLSLGADICMYSATKYMNGYSDVVMGLVSLNSESLHDRLRFLQNSLGAVPSPIDCYLCNRGLKTLQVRMEKHFENGMAVAQFLESNPQVEKVIYPGLPSHPQHELAKRQCTGCPGMVTFYIKGSLQHAETFLQNLKLFTLAESLGGYESLAELPAIMTHASVPKSDREVLGISDTLIRLSVGLEDKQDLLDDLDQALKAANPPNASSN.

Substrate contacts are provided by Arg62, Tyr114, and Arg119. At Lys212 the chain carries N6-(pyridoxal phosphate)lysine. Glu339 contributes to the substrate binding site.

Belongs to the trans-sulfuration enzymes family. In terms of assembly, homotetramer. Interacts with CALM in a calcium-dependent manner. Pyridoxal 5'-phosphate serves as cofactor.

It is found in the cytoplasm. It carries out the reaction L,L-cystathionine + H2O = 2-oxobutanoate + L-cysteine + NH4(+). It participates in amino-acid biosynthesis; L-cysteine biosynthesis; L-cysteine from L-homocysteine and L-serine: step 2/2. Functionally, catalyzes the last step in the trans-sulfuration pathway from methionine to cysteine. Has broad substrate specificity. Converts cystathionine to cysteine, ammonia and 2-oxobutanoate. Converts two cysteine molecules to lanthionine and hydrogen sulfide. Can also accept homocysteine as substrate. Specificity depends on the levels of the endogenous substrates. Generates the endogenous signaling molecule hydrogen sulfide (H2S), and so contributes to the regulation of blood pressure. Acts as a cysteine-protein sulfhydrase by mediating sulfhydration of target proteins: sulfhydration consists of converting -SH groups into -SSH on specific cysteine residues of target proteins such as GAPDH, PTPN1 and NF-kappa-B subunit RELA, thereby regulating their function. The polypeptide is Cystathionine gamma-lyase (CTH) (Bos taurus (Bovine)).